The following is a 71-amino-acid chain: Exodeoxyribonuclease 7 small subunit (71 aa).

This sequence belongs to the XseB family. Heterooligomer composed of large and small subunits.

The protein localises to the cytoplasm. It catalyses the reaction Exonucleolytic cleavage in either 5'- to 3'- or 3'- to 5'-direction to yield nucleoside 5'-phosphates.. Its function is as follows. Bidirectionally degrades single-stranded DNA into large acid-insoluble oligonucleotides, which are then degraded further into small acid-soluble oligonucleotides. The protein is Exodeoxyribonuclease 7 small subunit of Streptococcus equi subsp. zooepidemicus (strain H70).